The following is a 746-amino-acid chain: Root phototropism protein 3 (746 aa).

Positions 1–24 (MMWESESDGGVGVGGGGGREYGDG) are disordered. A compositionally biased stretch (gly residues) spans 9–19 (GGVGVGGGGGR). A BTB domain is found at 54 to 122 (SDLLVKIGDM…CYGVPVDLTA (69 aa)). The NPH3 domain maps to 250–605 (DWWFEDVSIL…VQVLFSEQVK (356 aa)). Positions 461–500 (EQTEGSSPSRMSPSPSQSMYADIPRGNNNNGGGGGGNNQN) are disordered. Low complexity predominate over residues 466 to 478 (SSPSRMSPSPSQS). Tyr-546 is modified (phosphotyrosine). The tract at residues 708 to 746 (SKLTKMSGQESHDISSGGEQAGVDHPPPRKPRRWRNSIS) is disordered. Residues 735-746 (PRKPRRWRNSIS) are compositionally biased toward basic residues.

It belongs to the NPH3 family. As to quaternary structure, interacts with PKS1, PKS2, RPT2, PHOT1 and PHOT2. Subunit of a complex made of CAR6, PHOT1 and RPT3/NPH3. Phosphorylated in the dark. Expressed in hypocotyls, guard cells and mesophyll cells.

It localises to the cell membrane. Its pathway is protein modification; protein ubiquitination. Its function is as follows. May act as a substrate-specific adapter of an E3 ubiquitin-protein ligase complex (CUL3-RBX1-BTB) which mediates the ubiquitination and subsequent proteasomal degradation of target proteins. Signal transducer of the phototropic response and photo-induced movements. Involved in the phot1 pathway under low blue light (LBL) fluence rate and in the phot2 pathway under higher fluence rate of blue light (HBL). Necessary for root and hypocotyl phototropisms, but not for the regulation of stomata opening. Not involved in chloroplast accumulation and translocation. The chain is Root phototropism protein 3 (RPT3) from Arabidopsis thaliana (Mouse-ear cress).